An 875-amino-acid chain; its full sequence is Serine/threonine-protein kinase D2 (875 aa).

A compositionally biased stretch (low complexity) spans 1–12 (MAAAPSHPAGLP). The segment at 1 to 35 (MAAAPSHPAGLPGSPGPGSPPPPGGLDLQSPPPLL) is disordered. Over residues 14 to 35 (SPGPGSPPPPGGLDLQSPPPLL) the composition is skewed to pro residues. At S30 the chain carries Phosphoserine. A Phosphotyrosine modification is found at Y87. Residues 138-188 (PHALTVHSYRAPAFCDHCGEMLFGLVRQGLKCDGCGLNYHKRCAFSIPNNC) form a Phorbol-ester/DAG-type 1 zinc finger. Phosphoserine is present on residues S197, S198, S200, S203, S206, S211, S212, and S214. Residues 224-247 (RSTTDLLPRRPPSSSSSSSSSSFY) form a disordered region. The span at 236-245 (SSSSSSSSSS) shows a compositional bias: low complexity. The residue at position 244 (S244) is a Phosphoserine; by CSNK1D and CSNK1E. S245 is modified (phosphoserine). The Phorbol-ester/DAG-type 2 zinc finger occupies 265-315 (PHTFLIHSYTRPTVCQACKKLLKGLFRQGLQCKDCKFNCHKRCATRVPNDC). Positions 332–374 (DYSEADKSSISDELEDSGVIPGSHSESALHASEEEEGEGHKAQ) are disordered. A PH domain is found at 398-510 (TTLREGWVVH…WETAIRQALM (113 aa)). Y408 bears the Phosphotyrosine mark. At Y439 the chain carries Phosphotyrosine; by ABL1. S519 carries the phosphoserine modification. Residues 552-808 (IFPDEVLGSG…VDKSLSHPWL (257 aa)) enclose the Protein kinase domain. ATP is bound by residues 558-566 (LGSGQFGVV) and K581. D675 functions as the Proton acceptor in the catalytic mechanism. S707 is subject to Phosphoserine; by PKC. S711 carries the post-translational modification Phosphoserine; by autocatalysis. Phosphotyrosine; by ABL1 is present on Y718. The short motif at 725 to 727 (LNQ) is the Important for ABL1-mediated Tyr-718 phosphorylation element. S873 is modified (phosphoserine; by autocatalysis).

This sequence belongs to the protein kinase superfamily. CAMK Ser/Thr protein kinase family. PKD subfamily. Interacts (via C-terminus) with LCK. Interacts (via N-terminus and zing-finger domain 1 and 2) with PRKCD in response to oxidative stress; the interaction is independent of PRKD2 tyrosine phosphorylation. It depends on Mg(2+) as a cofactor. In terms of processing, phosphorylation of Ser-873 correlates with the activation status of the kinase. Ser-707 is probably phosphorylated by PKC. Phosphorylation at Ser-244 by CSNK1D and CSNK1E promotes nuclear localization and substrate targeting. Phosphorylation at Ser-244, Ser-707 and Ser-711 is required for nuclear localization. Phosphorylated at Tyr-438 by ABL1 in response to oxidative stress. Phosphorylated at Tyr-718 by ABL1 specifically in response to oxidative stress; requires prior phosphorylation at Ser-707 or/and Ser-711.

The protein resides in the cytoplasm. The protein localises to the cell membrane. It is found in the golgi apparatus. It localises to the trans-Golgi network. The catalysed reaction is L-seryl-[protein] + ATP = O-phospho-L-seryl-[protein] + ADP + H(+). The enzyme catalyses L-threonyl-[protein] + ATP = O-phospho-L-threonyl-[protein] + ADP + H(+). With respect to regulation, activated by DAG and phorbol esters. Phorbol-ester/DAG-type domains bind DAG, mediating translocation to membranes. Autophosphorylation of Ser-711 and phosphorylation of Ser-707 by PKC relieves auto-inhibition by the PH domain. Catalytic activity is further increased by phosphorylation at Tyr-718 in response to oxidative stress. Its function is as follows. Serine/threonine-protein kinase that converts transient diacylglycerol (DAG) signals into prolonged physiological effects downstream of PKC, and is involved in the regulation of cell proliferation via MAPK1/3 (ERK1/2) signaling, oxidative stress-induced NF-kappa-B activation, inhibition of HDAC7 transcriptional repression, signaling downstream of T-cell antigen receptor (TCR) and cytokine production, and plays a role in Golgi membrane trafficking, angiogenesis, secretory granule release and cell adhesion. May potentiate mitogenesis induced by the neuropeptide bombesin by mediating an increase in the duration of MAPK1/3 (ERK1/2) signaling, which leads to accumulation of immediate-early gene products including FOS that stimulate cell cycle progression. In response to oxidative stress, is phosphorylated at Tyr-438 and Tyr-718 by ABL1, which leads to the activation of PRKD2 without increasing its catalytic activity, and mediates activation of NF-kappa-B. In response to the activation of the gastrin receptor CCKBR, is phosphorylated at Ser-244 by CSNK1D and CSNK1E, translocates to the nucleus, phosphorylates HDAC7, leading to nuclear export of HDAC7 and inhibition of HDAC7 transcriptional repression of NR4A1/NUR77. Upon TCR stimulation, is activated independently of ZAP70, translocates from the cytoplasm to the nucleus and is required for interleukin-2 (IL2) promoter up-regulation. During adaptive immune responses, is required in peripheral T-lymphocytes for the production of the effector cytokines IL2 and IFNG after TCR engagement and for optimal induction of antibody responses to antigens. In epithelial cells stimulated with lysophosphatidic acid (LPA), is activated through a PKC-dependent pathway and mediates LPA-stimulated interleukin-8 (IL8) secretion via a NF-kappa-B-dependent pathway. During TCR-induced T-cell activation, interacts with and is activated by the tyrosine kinase LCK, which results in the activation of the NFAT transcription factors. In the trans-Golgi network (TGN), regulates the fission of transport vesicles that are on their way to the plasma membrane and in polarized cells is involved in the transport of proteins from the TGN to the basolateral membrane. Plays an important role in endothelial cell proliferation and migration prior to angiogenesis, partly through modulation of the expression of KDR/VEGFR2 and FGFR1, two key growth factor receptors involved in angiogenesis. In secretory pathway, is required for the release of chromogranin-A (CHGA)-containing secretory granules from the TGN. Downstream of PRKCA, plays important roles in angiotensin-2-induced monocyte adhesion to endothelial cells. The polypeptide is Serine/threonine-protein kinase D2 (Prkd2) (Mus musculus (Mouse)).